The chain runs to 378 residues: Succinyl-diaminopimelate desuccinylase (378 aa).

Zn(2+) is bound at residue His68. The active site involves Asp70. Asp101 is a Zn(2+) binding site. Glu135 serves as the catalytic Proton acceptor. Residues Glu136, Glu164, and His350 each contribute to the Zn(2+) site.

Belongs to the peptidase M20A family. DapE subfamily. As to quaternary structure, homodimer. Requires Zn(2+) as cofactor. Co(2+) is required as a cofactor.

It catalyses the reaction N-succinyl-(2S,6S)-2,6-diaminopimelate + H2O = (2S,6S)-2,6-diaminopimelate + succinate. It functions in the pathway amino-acid biosynthesis; L-lysine biosynthesis via DAP pathway; LL-2,6-diaminopimelate from (S)-tetrahydrodipicolinate (succinylase route): step 3/3. In terms of biological role, catalyzes the hydrolysis of N-succinyl-L,L-diaminopimelic acid (SDAP), forming succinate and LL-2,6-diaminopimelate (DAP), an intermediate involved in the bacterial biosynthesis of lysine and meso-diaminopimelic acid, an essential component of bacterial cell walls. This is Succinyl-diaminopimelate desuccinylase from Acinetobacter baumannii (strain ATCC 17978 / DSM 105126 / CIP 53.77 / LMG 1025 / NCDC KC755 / 5377).